A 393-amino-acid polypeptide reads, in one-letter code: Phosphoglycerate kinase (393 aa).

Substrate is bound by residues 21 to 23, Arg-36, 59 to 62, Arg-114, and Arg-147; these read DLN and HLGR. Residues Lys-198, Glu-320, and 346–349 contribute to the ATP site; that span reads GGDT.

The protein belongs to the phosphoglycerate kinase family. In terms of assembly, monomer.

The protein resides in the cytoplasm. The catalysed reaction is (2R)-3-phosphoglycerate + ATP = (2R)-3-phospho-glyceroyl phosphate + ADP. The protein operates within carbohydrate degradation; glycolysis; pyruvate from D-glyceraldehyde 3-phosphate: step 2/5. This is Phosphoglycerate kinase from Methylobacillus flagellatus (strain ATCC 51484 / DSM 6875 / VKM B-1610 / KT).